Here is a 304-residue protein sequence, read N- to C-terminus: Acetyl-coenzyme A carboxylase carboxyl transferase subunit beta (304 aa).

Residues 23–292 enclose the CoA carboxyltransferase N-terminal domain; the sequence is VWTKCDSCGQ…PNPEAPREGV (270 aa). Cys27, Cys30, Cys46, and Cys49 together coordinate Zn(2+). The C4-type zinc finger occupies 27-49; it reads CDSCGQVLYRAELERNLEVCPKC. The tract at residues 284–304 is disordered; that stretch reads NPEAPREGVVVPPVPDQEPEA. Residues 295 to 304 are compositionally biased toward pro residues; it reads PPVPDQEPEA.

It belongs to the AccD/PCCB family. In terms of assembly, acetyl-CoA carboxylase is a heterohexamer composed of biotin carboxyl carrier protein (AccB), biotin carboxylase (AccC) and two subunits each of ACCase subunit alpha (AccA) and ACCase subunit beta (AccD). Zn(2+) serves as cofactor.

The protein localises to the cytoplasm. It catalyses the reaction N(6)-carboxybiotinyl-L-lysyl-[protein] + acetyl-CoA = N(6)-biotinyl-L-lysyl-[protein] + malonyl-CoA. The protein operates within lipid metabolism; malonyl-CoA biosynthesis; malonyl-CoA from acetyl-CoA: step 1/1. Component of the acetyl coenzyme A carboxylase (ACC) complex. Biotin carboxylase (BC) catalyzes the carboxylation of biotin on its carrier protein (BCCP) and then the CO(2) group is transferred by the transcarboxylase to acetyl-CoA to form malonyl-CoA. This Escherichia coli O6:K15:H31 (strain 536 / UPEC) protein is Acetyl-coenzyme A carboxylase carboxyl transferase subunit beta.